Here is a 273-residue protein sequence, read N- to C-terminus: Sulfur carrier protein FdhD (273 aa).

Cysteine 124 functions as the Cysteine persulfide intermediate in the catalytic mechanism. 263 to 268 is a Mo-bis(molybdopterin guanine dinucleotide) binding site; the sequence is FCRQSR.

It belongs to the FdhD family.

It is found in the cytoplasm. In terms of biological role, required for formate dehydrogenase (FDH) activity. Acts as a sulfur carrier protein that transfers sulfur from IscS to the molybdenum cofactor prior to its insertion into FDH. This Acinetobacter baylyi (strain ATCC 33305 / BD413 / ADP1) protein is Sulfur carrier protein FdhD.